The sequence spans 186 residues: ATP synthase subunit delta (186 aa).

It belongs to the ATPase delta chain family. In terms of assembly, F-type ATPases have 2 components, F(1) - the catalytic core - and F(0) - the membrane proton channel. F(1) has five subunits: alpha(3), beta(3), gamma(1), delta(1), epsilon(1). CF(0) has four main subunits: a(1), b(1), b'(1) and c(10-14). The alpha and beta chains form an alternating ring which encloses part of the gamma chain. F(1) is attached to F(0) by a central stalk formed by the gamma and epsilon chains, while a peripheral stalk is formed by the delta, b and b' chains.

The protein localises to the cell inner membrane. In terms of biological role, f(1)F(0) ATP synthase produces ATP from ADP in the presence of a proton or sodium gradient. F-type ATPases consist of two structural domains, F(1) containing the extramembraneous catalytic core and F(0) containing the membrane proton channel, linked together by a central stalk and a peripheral stalk. During catalysis, ATP synthesis in the catalytic domain of F(1) is coupled via a rotary mechanism of the central stalk subunits to proton translocation. Its function is as follows. This protein is part of the stalk that links CF(0) to CF(1). It either transmits conformational changes from CF(0) to CF(1) or is implicated in proton conduction. The protein is ATP synthase subunit delta of Bradyrhizobium sp. (strain BTAi1 / ATCC BAA-1182).